We begin with the raw amino-acid sequence, 465 residues long: Phenylalanine--tRNA ligase alpha subunit (465 aa).

Positions 311 and 389 each coordinate L-phenylalanine. Glu391 is a binding site for Mg(2+).

The protein belongs to the class-II aminoacyl-tRNA synthetase family. Phe-tRNA synthetase alpha subunit type 2 subfamily. As to quaternary structure, tetramer of two alpha and two beta subunits. It depends on Mg(2+) as a cofactor.

The protein resides in the cytoplasm. The enzyme catalyses tRNA(Phe) + L-phenylalanine + ATP = L-phenylalanyl-tRNA(Phe) + AMP + diphosphate + H(+). In Metallosphaera sedula (strain ATCC 51363 / DSM 5348 / JCM 9185 / NBRC 15509 / TH2), this protein is Phenylalanine--tRNA ligase alpha subunit.